Consider the following 330-residue polypeptide: Glycerol-3-phosphate dehydrogenase [NAD(P)+] (330 aa).

NADPH-binding residues include Ser11, Phe12, Arg32, and Lys106. Residues Lys106, Gly133, and Ser135 each coordinate sn-glycerol 3-phosphate. Ala137 is a binding site for NADPH. 5 residues coordinate sn-glycerol 3-phosphate: Lys188, Asp241, Ser251, Arg252, and Asn253. Lys188 (proton acceptor) is an active-site residue. Arg252 lines the NADPH pocket. Val276 and Glu278 together coordinate NADPH.

Belongs to the NAD-dependent glycerol-3-phosphate dehydrogenase family.

It localises to the cytoplasm. It carries out the reaction sn-glycerol 3-phosphate + NAD(+) = dihydroxyacetone phosphate + NADH + H(+). It catalyses the reaction sn-glycerol 3-phosphate + NADP(+) = dihydroxyacetone phosphate + NADPH + H(+). Its pathway is membrane lipid metabolism; glycerophospholipid metabolism. Catalyzes the reduction of the glycolytic intermediate dihydroxyacetone phosphate (DHAP) to sn-glycerol 3-phosphate (G3P), the key precursor for phospholipid synthesis. The protein is Glycerol-3-phosphate dehydrogenase [NAD(P)+] of Clostridium botulinum (strain Eklund 17B / Type B).